The primary structure comprises 421 residues: Monopolin complex subunit mde4 (421 aa).

Disordered regions lie at residues 122-158 and 224-316; these read QKSN…NKDE and DRKL…MTVS. The span at 133–149 shows a compositional bias: polar residues; the sequence is VSQNRLRGSLDTVSSPS. The span at 224–238 shows a compositional bias: basic and acidic residues; the sequence is DRKLRMQKKSTERKS. Positions 262 to 287 are enriched in polar residues; it reads RQPNATSGSPLSVTPFLQKTSTSIGL. Low complexity predominate over residues 288–304; sequence SSSPPQSSPSAQSSQPF.

As to quaternary structure, component of a monopolin-like complex composed of pcs1 and mde4. The complex associates with the kinetochore.

The protein localises to the nucleus. The protein resides in the chromosome. It is found in the centromere. Its function is as follows. The monopolin-like pcs1/mde4 complex is essential for accurate chromosome segregation during mitosis and meiosis II. May clamp together microtubule binding sites on the same kinetochore, preventing merotelic attachment of microtubules. The sequence is that of Monopolin complex subunit mde4 (mde4) from Schizosaccharomyces pombe (strain 972 / ATCC 24843) (Fission yeast).